Consider the following 178-residue polypeptide: Probable DNA-directed RNA polymerase subunit delta (178 aa).

In terms of domain architecture, HTH HARE-type spans 14-81; sequence LSLIDVAHFI…GNNTWGLRAW (68 aa). Disordered regions lie at residues 89 to 122 and 141 to 178; these read EEVQ…DYDD and LDED…PEDK. Composition is skewed to acidic residues over residues 105 to 122, 141 to 150, and 161 to 178; these read DDDD…DYDD, LDEDEDDDDH, and TVED…PEDK.

The protein belongs to the RpoE family. RNAP is composed of a core of 2 alpha, a beta and a beta' subunits. The core is associated with a delta subunit and one of several sigma factors.

Its function is as follows. Participates in both the initiation and recycling phases of transcription. In the presence of the delta subunit, RNAP displays an increased specificity of transcription, a decreased affinity for nucleic acids, and an increased efficiency of RNA synthesis because of enhanced recycling. This is Probable DNA-directed RNA polymerase subunit delta from Listeria innocua serovar 6a (strain ATCC BAA-680 / CLIP 11262).